A 273-amino-acid chain; its full sequence is Coiled-coil domain-containing protein 122 (273 aa).

Residues 1–17 (MSDNKERKSQGFPKEDN) are compositionally biased toward basic and acidic residues. The interval 1 to 39 (MSDNKERKSQGFPKEDNQDTSSLADAVEKVAKQQQSQAS) is disordered. Coiled coils occupy residues 24–116 (ADAV…TAQE) and 179–269 (NRIT…RKCI).

The protein is Coiled-coil domain-containing protein 122 (CCDC122) of Homo sapiens (Human).